A 745-amino-acid polypeptide reads, in one-letter code: Copper-transporting ATPase (745 aa).

An HMA domain is found at 1–67 (MKESFYIEGM…LIEKLGYSPK (67 aa)). Residues 1 to 83 (MKESFYIEGM…KKEFFSPNVK (83 aa)) lie on the Cytoplasmic side of the membrane. Cu cation-binding residues include cysteine 12 and cysteine 15. Residues 84-104 (LALAVIFTLFVVYLSMGAMLS) form a helical membrane-spanning segment. At 105–124 (PSLLPESLLTINHHSNFLNA) the chain is on the extracellular side. A helical transmembrane segment spans residues 125–144 (CLQLIGALIVMHLGRDFYIQ). Residues 145–151 (GFKALWH) lie on the Cytoplasmic side of the membrane. The chain crosses the membrane as a helical span at residues 152–172 (RQPNMSSLIAIGTSAALISSL). Over 173-194 (WQLYLVYTNHYTDQWSYGHYYF) the chain is Extracellular. The helical transmembrane segment at 195-215 (ESVCVILMFVMVGKRIENVSK) threads the bilayer. Over 216-343 (DKALDAMQAL…KAEISRLADK (128 aa)) the chain is Cytoplasmic. The chain crosses the membrane as a helical span at residues 344–366 (VSSVFVPSVIAIAVLAFVVWLII). Over 367–379 (APKPDFWWNFRTA) the chain is Extracellular. Residues 380-397 (LEVFVSVLVISCPCALGL) traverse the membrane as a helical segment. The Cytoplasmic segment spans residues 398–685 (ATPMSILVAN…KLSQATIKNI (288 aa)). Residue aspartate 435 is the 4-aspartylphosphate intermediate of the active site. The Mg(2+) site is built by aspartate 631 and aspartate 635. The chain crosses the membrane as a helical span at residues 686 to 705 (KENLFWAFCYNSVFIPLACG). Residues 706-716 (VLYKANIMLSP) are Extracellular-facing. Residues 717-735 (AIAGLAMSLSSVSVVLNSQ) form a helical membrane-spanning segment. The Cytoplasmic portion of the chain corresponds to 736 to 745 (RLRNFKIKDH).

This sequence belongs to the cation transport ATPase (P-type) (TC 3.A.3) family. Type IB subfamily.

The protein resides in the cell membrane. It carries out the reaction Cu(2+)(in) + ATP + H2O = Cu(2+)(out) + ADP + phosphate + H(+). Its function is as follows. Probably involved in copper export. In Helicobacter pylori (strain J99 / ATCC 700824) (Campylobacter pylori J99), this protein is Copper-transporting ATPase (copA).